Here is a 246-residue protein sequence, read N- to C-terminus: Probable cytokinin riboside 5'-monophosphate phosphoribohydrolase LOGL5 (246 aa).

Over residues M1 to Q10 the composition is skewed to basic and acidic residues. A disordered region spans residues M1–T28. Substrate is bound by residues E103, R121–K122, G138–E144, and T150.

This sequence belongs to the LOG family. As to expression, expressed in roots and leaves.

It carries out the reaction N(6)-(dimethylallyl)adenosine 5'-phosphate + H2O = N(6)-dimethylallyladenine + D-ribose 5-phosphate. The enzyme catalyses 9-ribosyl-trans-zeatin 5'-phosphate + H2O = trans-zeatin + D-ribose 5-phosphate. Cytokinin-activating enzyme working in the direct activation pathway. Phosphoribohydrolase that converts inactive cytokinin nucleotides to the biologically active free-base forms. This chain is Probable cytokinin riboside 5'-monophosphate phosphoribohydrolase LOGL5 (LOGL5), found in Oryza sativa subsp. japonica (Rice).